A 369-amino-acid polypeptide reads, in one-letter code: Core histone macro-H2A.1 (369 aa).

The Histone H2A domain maps to 2–117 (SSRGGKKKST…NIHPELLAKK (116 aa)). 2 positions are modified to N6-lactoyllysine; alternate: Lys7 and Lys9. Lys18 is modified (N6-methyllysine). Lys116 bears the N6-acetyllysine; alternate mark. A Glycyl lysine isopeptide (Lys-Gly) (interchain with G-Cter in ubiquitin); alternate cross-link involves residue Lys116. Lys117 participates in a covalent cross-link: Glycyl lysine isopeptide (Lys-Gly) (interchain with G-Cter in ubiquitin). Lys123 is subject to N6-acetyllysine; alternate. At Lys123 the chain carries N6,N6-dimethyllysine; alternate. Lys123 participates in a covalent cross-link: Glycyl lysine isopeptide (Lys-Gly) (interchain with G-Cter in SUMO2); alternate. Residues 128 to 180 (ITPPPAKKAKSPSQKKPVSKKAGGKKGARKSKKKQGEVSKAASADSTTEGTPA) are disordered. Thr129 is subject to Phosphothreonine. Basic residues predominate over residues 144–160 (PVSKKAGGKKGARKSKK). A Glycyl lysine isopeptide (Lys-Gly) (interchain with G-Cter in SUMO2) cross-link involves residue Lys167. A phosphoserine mark is found at Ser170 and Ser173. The residue at position 178 (Thr178) is a Phosphothreonine. Residues 184–367 (TVLSTKSLFL…IYVQEMAKLD (184 aa)) form the Macro domain. Lys189 is covalently cross-linked (Glycyl lysine isopeptide (Lys-Gly) (interchain with G-Cter in SUMO2)). The a glycoprotein site is built by Asp203, Ile204, Val226, Ser275, Gly312, Ser313, Gly314, and Asn316. Lys320 is covalently cross-linked (Glycyl lysine isopeptide (Lys-Gly) (interchain with G-Cter in SUMO2)).

It belongs to the histone H2A family. In terms of assembly, the nucleosome is a histone octamer containing two molecules each of H2A, H2B, H3 and H4 assembled in one H3-H4 heterotetramer and two H2A-H2B heterodimers. Interacts with HDAC1 and HDAC2. Interacts with SPOP. Part of a complex consisting of MACROH2A1, CUL3 and SPOP. As to quaternary structure, interacts with PARP1. Post-translationally, monoubiquitinated at either Lys-116 or Lys-117. May also be polyubiquitinated. Ubiquitination is mediated by the CUL3/SPOP E3 complex and does not promote proteasomal degradation. Instead, it is required for enrichment in inactive X chromosome chromatin. As to expression, widely expressed.

The protein localises to the nucleus. Its subcellular location is the chromosome. Variant histone H2A which replaces conventional H2A in a subset of nucleosomes where it represses transcription. Nucleosomes wrap and compact DNA into chromatin, limiting DNA accessibility to the cellular machineries which require DNA as a template. Histones thereby play a central role in transcription regulation, DNA repair, DNA replication and chromosomal stability. DNA accessibility is regulated via a complex set of post-translational modifications of histones, also called histone code, and nucleosome remodeling. Involved in stable X chromosome inactivation. Inhibits the binding of transcription factors, including NF-kappa-B, and interferes with the activity of remodeling SWI/SNF complexes. Inhibits histone acetylation by EP300 and recruits class I HDACs, which induces a hypoacetylated state of chromatin. In terms of biological role, isoform that specifically binds poly-ADP-ribose and O-acetyl-ADP-ribose and plays a key role in NAD(+) metabolism. Able to bind to the ends of poly-ADP-ribose chains created by PARP1 and cap them. This prevents PARP1 from further addition of ADP-ribose and thus limits the consumption of nuclear NAD(+), allowing the cell to maintain proper NAD(+) levels in both the nucleus and the mitochondria to promote proper mitochondrial respiration. Increases the expression of genes involved in redox metabolism, including SOD3. Its function is as follows. In contrast to isoform 1, does not bind poly-ADP-ribose. Represses SOD3 gene expression. The sequence is that of Core histone macro-H2A.1 from Homo sapiens (Human).